Consider the following 398-residue polypeptide: Phosphoglycerate kinase (398 aa).

Residues 24-26 (DFN), Arg40, 63-66 (HMGR), Arg122, and Arg155 contribute to the substrate site. ATP-binding positions include Lys206, Gly294, Glu325, and 354 to 357 (GGDS).

Belongs to the phosphoglycerate kinase family. In terms of assembly, monomer.

The protein resides in the cytoplasm. It carries out the reaction (2R)-3-phosphoglycerate + ATP = (2R)-3-phospho-glyceroyl phosphate + ADP. It participates in carbohydrate degradation; glycolysis; pyruvate from D-glyceraldehyde 3-phosphate: step 2/5. This is Phosphoglycerate kinase from Picosynechococcus sp. (strain ATCC 27264 / PCC 7002 / PR-6) (Agmenellum quadruplicatum).